The sequence spans 472 residues: tRNA modification GTPase MnmE (472 aa).

Residues R28, E91, and K130 each coordinate (6S)-5-formyl-5,6,7,8-tetrahydrofolate. The TrmE-type G domain occupies 225-391 (GAKVVLAGKT…LSEKAYSVLA (167 aa)). N235 lines the K(+) pocket. GTP-binding positions include 235–240 (NAGKSS), 254–260 (SDIHGTT), and 279–282 (DTAG). Mg(2+) is bound at residue S239. K(+) is bound by residues S254, I256, and T259. T260 contributes to the Mg(2+) binding site. K472 serves as a coordination point for (6S)-5-formyl-5,6,7,8-tetrahydrofolate.

The protein belongs to the TRAFAC class TrmE-Era-EngA-EngB-Septin-like GTPase superfamily. TrmE GTPase family. Homodimer. Heterotetramer of two MnmE and two MnmG subunits. K(+) serves as cofactor.

It is found in the cytoplasm. Functionally, exhibits a very high intrinsic GTPase hydrolysis rate. Involved in the addition of a carboxymethylaminomethyl (cmnm) group at the wobble position (U34) of certain tRNAs, forming tRNA-cmnm(5)s(2)U34. The sequence is that of tRNA modification GTPase MnmE from Treponema denticola (strain ATCC 35405 / DSM 14222 / CIP 103919 / JCM 8153 / KCTC 15104).